The sequence spans 740 residues: Elongation factor 2 (740 aa).

Positions 23 to 264 constitute a tr-type G domain; it reads AQIRNAGTLA…MIIEHIPPPN (242 aa). GTP is bound by residues 32-39, 98-102, and 152-155; these read AHVDHGKT, DTPGH, and NKID. His-605 is modified (diphthamide).

It belongs to the TRAFAC class translation factor GTPase superfamily. Classic translation factor GTPase family. EF-G/EF-2 subfamily.

The protein localises to the cytoplasm. Its function is as follows. Catalyzes the GTP-dependent ribosomal translocation step during translation elongation. During this step, the ribosome changes from the pre-translocational (PRE) to the post-translocational (POST) state as the newly formed A-site-bound peptidyl-tRNA and P-site-bound deacylated tRNA move to the P and E sites, respectively. Catalyzes the coordinated movement of the two tRNA molecules, the mRNA and conformational changes in the ribosome. This chain is Elongation factor 2, found in Pyrobaculum aerophilum (strain ATCC 51768 / DSM 7523 / JCM 9630 / CIP 104966 / NBRC 100827 / IM2).